The primary structure comprises 856 residues: DNA mismatch repair protein MutS (856 aa).

ATP is bound at residue 623 to 630; sequence GPNMSGKS.

It belongs to the DNA mismatch repair MutS family.

Functionally, this protein is involved in the repair of mismatches in DNA. It is possible that it carries out the mismatch recognition step. This protein has a weak ATPase activity. The polypeptide is DNA mismatch repair protein MutS (Natronomonas pharaonis (strain ATCC 35678 / DSM 2160 / CIP 103997 / JCM 8858 / NBRC 14720 / NCIMB 2260 / Gabara) (Halobacterium pharaonis)).